Consider the following 248-residue polypeptide: Probable uridine-cytidine kinase (248 aa).

Residue 15-23 participates in ATP binding; it reads GGTSCGKST. 5 residues coordinate substrate: Asp73, Tyr101, Arg154, Arg164, and Gln172. Asp201 is a binding site for ATP. The disordered stretch occupies residues 224–248; that stretch reads SDEEEEKENELVKQGSFRRPFSRPH.

The protein belongs to the uridine kinase family.

It carries out the reaction uridine + ATP = UMP + ADP + H(+). It catalyses the reaction cytidine + ATP = CMP + ADP + H(+). The protein operates within pyrimidine metabolism; CTP biosynthesis via salvage pathway; CTP from cytidine: step 1/3. It participates in pyrimidine metabolism; UMP biosynthesis via salvage pathway; UMP from uridine: step 1/1. In Caenorhabditis elegans, this protein is Probable uridine-cytidine kinase.